Reading from the N-terminus, the 362-residue chain is S-adenosylmethionine:tRNA ribosyltransferase-isomerase (362 aa).

This sequence belongs to the QueA family. Monomer.

The protein localises to the cytoplasm. It catalyses the reaction 7-aminomethyl-7-carbaguanosine(34) in tRNA + S-adenosyl-L-methionine = epoxyqueuosine(34) in tRNA + adenine + L-methionine + 2 H(+). It participates in tRNA modification; tRNA-queuosine biosynthesis. In terms of biological role, transfers and isomerizes the ribose moiety from AdoMet to the 7-aminomethyl group of 7-deazaguanine (preQ1-tRNA) to give epoxyqueuosine (oQ-tRNA). This Deinococcus radiodurans (strain ATCC 13939 / DSM 20539 / JCM 16871 / CCUG 27074 / LMG 4051 / NBRC 15346 / NCIMB 9279 / VKM B-1422 / R1) protein is S-adenosylmethionine:tRNA ribosyltransferase-isomerase.